The sequence spans 278 residues: 3-methyl-2-oxobutanoate hydroxymethyltransferase 1 (278 aa).

Mg(2+) is bound by residues Asp-49 and Asp-88. Residues 49–50 (DS), Asp-88, and Lys-118 each bind 3-methyl-2-oxobutanoate. Glu-120 serves as a coordination point for Mg(2+). Catalysis depends on Glu-187, which acts as the Proton acceptor.

It belongs to the PanB family. As to quaternary structure, homodecamer; pentamer of dimers. Mg(2+) is required as a cofactor.

The protein resides in the cytoplasm. The catalysed reaction is 3-methyl-2-oxobutanoate + (6R)-5,10-methylene-5,6,7,8-tetrahydrofolate + H2O = 2-dehydropantoate + (6S)-5,6,7,8-tetrahydrofolate. The protein operates within cofactor biosynthesis; (R)-pantothenate biosynthesis; (R)-pantoate from 3-methyl-2-oxobutanoate: step 1/2. Its function is as follows. Catalyzes the reversible reaction in which hydroxymethyl group from 5,10-methylenetetrahydrofolate is transferred onto alpha-ketoisovalerate to form ketopantoate. In Hahella chejuensis (strain KCTC 2396), this protein is 3-methyl-2-oxobutanoate hydroxymethyltransferase 1.